Consider the following 368-residue polypeptide: tRNA-specific 2-thiouridylase MnmA (368 aa).

ATP contacts are provided by residues 12–19 (GMSGGVDS) and Met38. Residues 98–100 (NPD) are interaction with target base in tRNA. Catalysis depends on Cys103, which acts as the Nucleophile. Cys103 and Cys200 form a disulfide bridge. Residue Gly128 participates in ATP binding. The segment at 150–152 (KDQ) is interaction with tRNA. The active-site Cysteine persulfide intermediate is the Cys200. The tract at residues 311-312 (RY) is interaction with tRNA.

The protein belongs to the MnmA/TRMU family.

The protein resides in the cytoplasm. The enzyme catalyses S-sulfanyl-L-cysteinyl-[protein] + uridine(34) in tRNA + AH2 + ATP = 2-thiouridine(34) in tRNA + L-cysteinyl-[protein] + A + AMP + diphosphate + H(+). Catalyzes the 2-thiolation of uridine at the wobble position (U34) of tRNA, leading to the formation of s(2)U34. The protein is tRNA-specific 2-thiouridylase MnmA of Aeromonas hydrophila subsp. hydrophila (strain ATCC 7966 / DSM 30187 / BCRC 13018 / CCUG 14551 / JCM 1027 / KCTC 2358 / NCIMB 9240 / NCTC 8049).